Consider the following 101-residue polypeptide: Small ribosomal subunit protein bS18c (101 aa).

Positions 1–19 (MDKSKRPFRKSKRSFRKRL) are enriched in basic residues. The interval 1 to 23 (MDKSKRPFRKSKRSFRKRLPPIG) is disordered.

The protein belongs to the bacterial ribosomal protein bS18 family. As to quaternary structure, part of the 30S ribosomal subunit.

Its subcellular location is the plastid. The protein localises to the chloroplast. The polypeptide is Small ribosomal subunit protein bS18c (Chloranthus spicatus (Chulantree)).